Consider the following 147-residue polypeptide: Ribonuclease P protein component 2 (147 aa).

This sequence belongs to the eukaryotic/archaeal RNase P protein component 2 family. In terms of assembly, consists of a catalytic RNA component and at least 4-5 protein subunits.

It localises to the cytoplasm. It carries out the reaction Endonucleolytic cleavage of RNA, removing 5'-extranucleotides from tRNA precursor.. Functionally, part of ribonuclease P, a protein complex that generates mature tRNA molecules by cleaving their 5'-ends. This Methanocorpusculum labreanum (strain ATCC 43576 / DSM 4855 / Z) protein is Ribonuclease P protein component 2.